A 146-amino-acid chain; its full sequence is Mitochondrial pyruvate carrier 3 (146 aa).

The N-terminal 20 residues, 1–20, are a transit peptide targeting the mitochondrion; the sequence is MSASAFNFAFRRFWNSETGP. 3 helical membrane-spanning segments follow: residues 23–39, 55–71, and 78–94; these read VHFW…FAGL, LSLL…SFVI, and LASV…YHLT.

Belongs to the mitochondrial pyruvate carrier (MPC) (TC 2.A.105) family. The functional 150 kDa pyruvate import complex is a heteromer of MPC1 and either MPC2 or MPC3.

Its subcellular location is the mitochondrion. It localises to the mitochondrion inner membrane. In terms of biological role, mediates the uptake of pyruvate into mitochondria. The chain is Mitochondrial pyruvate carrier 3 from Saccharomyces cerevisiae (strain ATCC 204508 / S288c) (Baker's yeast).